The chain runs to 170 residues: MAAPVMSAFGRLQGLIRTERSLLTHVQSRCIQTTSVCLKNRAARVRVGKGDKPVTYEAAHPPHYIAHRKGWLSQHTGNLDGEGGAAERTIEDVFIRRFIFGTFHGCLANEIVIKRRANLLIICAIFIRKMPTQKFYFLIGYTETLLSFLYKCPVKLEVQTVEEKVIYKYL.

A mitochondrion-targeting transit peptide spans 1–30 (MAAPVMSAFGRLQGLIRTERSLLTHVQSRC).

Belongs to the universal ribosomal protein uS3 family. Component of the mitochondrial ribosome small subunit (28S) which comprises a 12S rRNA and about 30 distinct proteins.

It localises to the mitochondrion. The sequence is that of Small ribosomal subunit protein uS3mB (mrps24-b) from Xenopus laevis (African clawed frog).